Consider the following 255-residue polypeptide: Adenosine 5'-phosphosulfate reductase (255 aa).

The disordered stretch occupies residues 1-39; it reads MMTAEVRTPEQGGGPLTTEPRAPRSAPGHADASAPAFGP. 4 residues coordinate [4Fe-4S] cluster: cysteine 137, cysteine 138, cysteine 220, and cysteine 223. Cysteine 246 acts as the Nucleophile; cysteine thiosulfonate intermediate in catalysis.

This sequence belongs to the PAPS reductase family. CysH subfamily. It depends on [4Fe-4S] cluster as a cofactor.

Its subcellular location is the cytoplasm. It carries out the reaction [thioredoxin]-disulfide + sulfite + AMP + 2 H(+) = adenosine 5'-phosphosulfate + [thioredoxin]-dithiol. Its pathway is sulfur metabolism; hydrogen sulfide biosynthesis; sulfite from sulfate. Its function is as follows. Catalyzes the formation of sulfite from adenosine 5'-phosphosulfate (APS) using thioredoxin as an electron donor. This is Adenosine 5'-phosphosulfate reductase from Deinococcus radiodurans (strain ATCC 13939 / DSM 20539 / JCM 16871 / CCUG 27074 / LMG 4051 / NBRC 15346 / NCIMB 9279 / VKM B-1422 / R1).